The sequence spans 372 residues: Cytochrome b (372 aa).

4 consecutive transmembrane segments (helical) span residues 25-45, 69-90, 105-125, and 170-190; these read FGSM…FLAI, WTMQ…YIHI, WLSG…GYVL, and FFAL…IHII. H75 and H89 together coordinate heme b. Residues H174 and H188 each contribute to the heme b site. A ubiquinone is bound at residue H193. A run of 4 helical transmembrane segments spans residues 218 to 238, 280 to 300, 312 to 332, and 339 to 358; these read YKDI…MAFA, LGGT…PFTH, LAQM…WTAT, and FILI…IINP.

The protein belongs to the cytochrome b family. The cytochrome bc1 complex contains 3 respiratory subunits (MT-CYB, CYC1 and UQCRFS1), 2 core proteins (UQCRC1 and UQCRC2) and probably 6 low-molecular weight proteins. Heme b serves as cofactor.

The protein localises to the mitochondrion inner membrane. Component of the ubiquinol-cytochrome c reductase complex (complex III or cytochrome b-c1 complex) that is part of the mitochondrial respiratory chain. The b-c1 complex mediates electron transfer from ubiquinol to cytochrome c. Contributes to the generation of a proton gradient across the mitochondrial membrane that is then used for ATP synthesis. In Acanthophis antarcticus (Common death adder), this protein is Cytochrome b (MT-CYB).